A 72-amino-acid polypeptide reads, in one-letter code: Large ribosomal subunit protein bL28 (72 aa).

Belongs to the bacterial ribosomal protein bL28 family.

The chain is Large ribosomal subunit protein bL28 from Chlorobium luteolum (strain DSM 273 / BCRC 81028 / 2530) (Pelodictyon luteolum).